We begin with the raw amino-acid sequence, 171 residues long: Putative MucR family transcriptional regulatory protein y4pD (171 aa).

The protein belongs to the ros/MucR family.

This Sinorhizobium fredii (strain NBRC 101917 / NGR234) protein is Putative MucR family transcriptional regulatory protein y4pD.